The primary structure comprises 505 residues: ATP synthase subunit alpha, chloroplastic (505 aa).

170-177 provides a ligand contact to ATP; it reads GDRQTGKT.

Belongs to the ATPase alpha/beta chains family. F-type ATPases have 2 components, CF(1) - the catalytic core - and CF(0) - the membrane proton channel. CF(1) has five subunits: alpha(3), beta(3), gamma(1), delta(1), epsilon(1). CF(0) has four main subunits: a, b, b' and c.

Its subcellular location is the plastid. The protein localises to the chloroplast thylakoid membrane. The enzyme catalyses ATP + H2O + 4 H(+)(in) = ADP + phosphate + 5 H(+)(out). Functionally, produces ATP from ADP in the presence of a proton gradient across the membrane. The alpha chain is a regulatory subunit. The chain is ATP synthase subunit alpha, chloroplastic from Carica papaya (Papaya).